The following is a 307-amino-acid chain: MAETTKTHVILLACGSFNPITKGHIQMFERARDYLHKTGKFIVIGGIISPVHDSYGKQGLVSSRHRLNMCQLAVQNSDWIRVDPWECYQDTWQTTCSVLEHHRDLMKRVTGCILSNVNTPSVTPVIGQSLNQSTQPVYQNSNLSNKPTAVRILGKVGEGLSRMCCVRPNLQRVTFVDENANLGTVMRYEEIELRILLLCGSDLLESFCIPGLWNESDMEVIVGDFGIVVVPRDSVEPEQIINHSSLLRKYKNNILTVKDDSNHPMAVVSSTKSRLALQHGDGHVVDYLAQPVIDYVLKSQLYINTSG.

Residues Ser-16 and Phe-17 each coordinate NAD(+). ATP is bound at residue His-24. Positions 92, 95, 200, 202, 212, 213, and 232 each coordinate NAD(+). ATP is bound at residue 271–274; that stretch reads TKSR.

This sequence belongs to the eukaryotic NMN adenylyltransferase family. Monomer. Mg(2+) serves as cofactor.

Its subcellular location is the golgi apparatus membrane. It is found in the cytoplasmic vesicle membrane. The protein localises to the cytoplasm. The protein resides in the cell projection. It localises to the axon. The catalysed reaction is beta-nicotinamide D-ribonucleotide + ATP + H(+) = diphosphate + NAD(+). It carries out the reaction nicotinate beta-D-ribonucleotide + ATP + H(+) = deamido-NAD(+) + diphosphate. It participates in cofactor biosynthesis; NAD(+) biosynthesis; NAD(+) from nicotinamide D-ribonucleotide: step 1/1. Its pathway is cofactor biosynthesis; NAD(+) biosynthesis; deamido-NAD(+) from nicotinate D-ribonucleotide: step 1/1. Its function is as follows. Nicotinamide/nicotinate-nucleotide adenylyltransferase that acts as an axon maintenance factor. Axon survival factor required for the maintenance of healthy axons: acts by delaying Wallerian axon degeneration, an evolutionarily conserved process that drives the loss of damaged axons. Catalyzes the formation of NAD(+) from nicotinamide mononucleotide (NMN) and ATP. Can also use the deamidated form; nicotinic acid mononucleotide (NaMN) as substrate but with a lower efficiency. Also catalyzes the reverse reaction, i.e. the pyrophosphorolytic cleavage of NAD(+). For the pyrophosphorolytic activity prefers NAD(+), NADH and NaAD as substrates and degrades nicotinic acid adenine dinucleotide phosphate (NHD) less effectively. Also acts as an activator of ADP-ribosylation by supporting the catalytic activity of PARP16 and promoting mono-ADP-ribosylation of ribosomes by PARP16. May be involved in the maintenance of axonal integrity. The chain is Nicotinamide/nicotinic acid mononucleotide adenylyltransferase 2 (nmnat2) from Xenopus tropicalis (Western clawed frog).